The primary structure comprises 885 residues: DNA polymerase eta (885 aa).

In terms of domain architecture, UmuC spans 18–274 (VLLVDMDCFF…LPVGKIKGLG (257 aa)). Asp22 and Met23 together coordinate Mg(2+). Mn(2+) is bound by residues Asp22 and Met23. Arg70 provides a ligand contact to a 2'-deoxyribonucleoside 5'-triphosphate. Mg(2+)-binding residues include Asp125 and Glu126. Mn(2+)-binding residues include Asp125 and Glu126. The active site involves Glu126. 2 disordered regions span residues 599-653 (AIEA…DLYV) and 658-677 (VPPT…RKFD). Over residues 608 to 618 (FEEDTEEETEL) the composition is skewed to acidic residues. Positions 628 to 649 (EGQSSDAGQEQDPNTLNDSTGN) are enriched in polar residues. The UBZ3-type 1 zinc finger occupies 701-737 (DILPTIKCDQCGANIPDEVKSLQTHRDHHFAQELSRT). Residues Cys708, Cys711, His725, and His729 each coordinate Zn(2+). A disordered region spans residues 722–783 (LQTHRDHHFA…YSTAPPSNSI (62 aa)). Residues 739–748 (RSTEREERTQ) are compositionally biased toward basic and acidic residues. Residues 766–780 (TAGSGSSSYSTAPPS) are compositionally biased toward low complexity. A UBZ3-type 2 zinc finger spans residues 798-832 (SDPQMNQCPECKAFIKCVDMPEHLDYHVARNLQRE). Zn(2+) contacts are provided by Cys805, Cys808, His820, and His824. Positions 846–870 (NKEKISPVQPKKQSQKKLNSTISAS) are disordered.

Belongs to the DNA polymerase type-Y family. In terms of assembly, interacts (via C-terminus) with nopo. Mg(2+) serves as cofactor. Mn(2+) is required as a cofactor. In terms of processing, ubiquitination enhanced by nopo. Expressed in ovaries and testes.

The protein resides in the nucleus. The enzyme catalyses DNA(n) + a 2'-deoxyribonucleoside 5'-triphosphate = DNA(n+1) + diphosphate. Its activity is regulated as follows. The enzyme in complex with the DNA substrate binds a third divalent metal cation. This binding is essential for catalyzing the DNA synthesis. Functionally, DNA polymerase specifically involved in the DNA repair by translesion synthesis (TLS). Plays an important role in translesion synthesis, where the normal high-fidelity DNA polymerases cannot proceed and DNA synthesis stalls. Inserts one or 2 nucleotide(s) opposite the lesion. During homologous recombination (HR) repair, has a overlapping role with the error-prone translesion polymerase PolZ1/DNApol-zeta to initiate repair synthesis that is completed by end joining or another polymerase that can bind and reinitiate synthesis. Particularly important for the repair of UV-induced pyrimidine dimers and for hydroxyurea (HU)-induced DNA damage. Although inserts the correct base, may cause base transitions and transversions depending upon the context. Forms a Schiff base with 5'-deoxyribose phosphate at abasic sites, but does not have any lyase activity, preventing the release of the 5'-deoxyribose phosphate (5'-dRP) residue. This covalent trapping of the enzyme by the 5'-dRP residue inhibits its DNA synthetic activity during base excision repair, thereby avoiding high incidence of mutagenesis. This Drosophila melanogaster (Fruit fly) protein is DNA polymerase eta.